The chain runs to 929 residues: DNA mismatch repair protein MutS (929 aa).

Residues Pro22 to Gly46 form a disordered region. Residues Ala23–Ala32 show a composition bias toward low complexity. An ATP-binding site is contributed by Gly678 to Ser685.

It belongs to the DNA mismatch repair MutS family.

Functionally, this protein is involved in the repair of mismatches in DNA. It is possible that it carries out the mismatch recognition step. This protein has a weak ATPase activity. This Rhodospirillum rubrum (strain ATCC 11170 / ATH 1.1.1 / DSM 467 / LMG 4362 / NCIMB 8255 / S1) protein is DNA mismatch repair protein MutS.